The following is a 193-amino-acid chain: Thymidine kinase (193 aa).

ATP is bound by residues 15–22 (GCMYSGKT) and 87–90 (DELH). Glu-88 serves as the catalytic Proton acceptor. Zn(2+) contacts are provided by Cys-147, Cys-150, Cys-185, and Cys-188.

The protein belongs to the thymidine kinase family. In terms of assembly, homotetramer.

The protein localises to the cytoplasm. The catalysed reaction is thymidine + ATP = dTMP + ADP + H(+). This is Thymidine kinase from Chloroflexus aurantiacus (strain ATCC 29366 / DSM 635 / J-10-fl).